The following is a 351-amino-acid chain: MVLSIRSQIIIGVVSSILLTSTILAIAYILMWFNGHMTLTLTLTTIITSCLTLLICSIFINPLIQKIKQFNIKTKQFANGNYASNDKTFNSPKEIYELNQSFNKMASEITQQMNQIKSEQQEKTELIQNLAHDLKTPLASIISYSEGLRDGIITKDHEIKESYDILIKQANRLSTLFDDMTHIITLNTGKTYPPELIQLDQLLVSILQPYEQRIKHENRTLEVNFCSEIDAFYQYRTPLERILTNLLDNALKFSNVGSRIDINISENKDQDTIDIAISDEGIGIIPELQERIFERTFRVENSRNTKTGGSGLGLYIANELAQQNNAKISVSSDIDVGTTMTVTLHKLDITT.

The next 2 helical transmembrane spans lie at 9 to 29 (IIIG…IAYI) and 40 to 60 (TLTL…SIFI). The region spanning 61–114 (NPLIQKIKQFNIKTKQFANGNYASNDKTFNSPKEIYELNQSFNKMASEITQQMN) is the HAMP domain. A Histidine kinase domain is found at 129-348 (NLAHDLKTPL…TMTVTLHKLD (220 aa)). Phosphohistidine; by autocatalysis is present on His-132.

In terms of processing, autophosphorylated.

Its subcellular location is the cell membrane. The enzyme catalyses ATP + protein L-histidine = ADP + protein N-phospho-L-histidine.. Functionally, member of the two-component regulatory system SaeR/SaeS involved in the regulation of staphylococcal virulence factors in a strain-dependent fashion. Probably functions as a membrane-associated protein kinase that upon sensing the appropriate signal, autophosphorylates and in turn activates the cytosolic response regulator SaeR. This chain is Histidine protein kinase SaeS (saeS), found in Staphylococcus aureus (strain MRSA252).